Reading from the N-terminus, the 573-residue chain is Putative ABC transporter ATP-binding protein LJ_1704 (573 aa).

ABC transporter domains follow at residues 6 to 247 (IEFK…GVRE) and 303 to 536 (LKLD…ASLK). Residues 40–47 (GPSGSGKS) and 337–344 (GQNGAGKT) each bind ATP.

Belongs to the ABC transporter superfamily.

It is found in the cell membrane. Probably part of an ABC transporter complex. Responsible for energy coupling to the transport system. In Lactobacillus johnsonii (strain CNCM I-12250 / La1 / NCC 533), this protein is Putative ABC transporter ATP-binding protein LJ_1704.